The primary structure comprises 431 residues: Serine hydroxymethyltransferase 2 (431 aa).

(6S)-5,6,7,8-tetrahydrofolate is bound by residues Leu-131 and 135–137 (GHL). The residue at position 240 (Lys-240) is an N6-(pyridoxal phosphate)lysine. Glu-256 lines the (6S)-5,6,7,8-tetrahydrofolate pocket.

Belongs to the SHMT family. Homodimer. Pyridoxal 5'-phosphate serves as cofactor.

It localises to the cytoplasm. It carries out the reaction (6R)-5,10-methylene-5,6,7,8-tetrahydrofolate + glycine + H2O = (6S)-5,6,7,8-tetrahydrofolate + L-serine. Its pathway is one-carbon metabolism; tetrahydrofolate interconversion. The protein operates within amino-acid biosynthesis; glycine biosynthesis; glycine from L-serine: step 1/1. Its function is as follows. Catalyzes the reversible interconversion of serine and glycine with tetrahydrofolate (THF) serving as the one-carbon carrier. This reaction serves as the major source of one-carbon groups required for the biosynthesis of purines, thymidylate, methionine, and other important biomolecules. Also exhibits THF-independent aldolase activity toward beta-hydroxyamino acids, producing glycine and aldehydes, via a retro-aldol mechanism. The polypeptide is Serine hydroxymethyltransferase 2 (Vibrio vulnificus (strain CMCP6)).